We begin with the raw amino-acid sequence, 185 residues long: MKLITGLGNPGRKYDQTKHNTGFMALDHYLEKNGLTLDKNKFEGLWTKQKINGEDVIFLEPQTFMNDSGKSIAQVANFFKIKPEDILVIHDDMDMPIGKIRIRANGKSGGHNGIKSIMACLGTNNFNRLKIGIRHPENESVVSWVLSPFNNDQQKLMDAAFETSENVINDFIKGKNAQYLMNQYN.

A tRNA-binding site is contributed by Y14. The Proton acceptor role is filled by H19. F64, N66, and N112 together coordinate tRNA.

Belongs to the PTH family. Monomer.

It localises to the cytoplasm. The catalysed reaction is an N-acyl-L-alpha-aminoacyl-tRNA + H2O = an N-acyl-L-amino acid + a tRNA + H(+). Its function is as follows. Hydrolyzes ribosome-free peptidyl-tRNAs (with 1 or more amino acids incorporated), which drop off the ribosome during protein synthesis, or as a result of ribosome stalling. In terms of biological role, catalyzes the release of premature peptidyl moieties from peptidyl-tRNA molecules trapped in stalled 50S ribosomal subunits, and thus maintains levels of free tRNAs and 50S ribosomes. The polypeptide is Peptidyl-tRNA hydrolase (Lactobacillus johnsonii (strain CNCM I-12250 / La1 / NCC 533)).